Reading from the N-terminus, the 447-residue chain is Phosphoglucosamine mutase (447 aa).

The Phosphoserine intermediate role is filled by Ser102. The Mg(2+) site is built by Ser102, Asp241, Asp243, and Asp245. Residue Ser102 is modified to Phosphoserine.

It belongs to the phosphohexose mutase family. Requires Mg(2+) as cofactor. Activated by phosphorylation.

The catalysed reaction is alpha-D-glucosamine 1-phosphate = D-glucosamine 6-phosphate. Functionally, catalyzes the conversion of glucosamine-6-phosphate to glucosamine-1-phosphate. This chain is Phosphoglucosamine mutase, found in Pseudomonas syringae pv. syringae (strain B728a).